Consider the following 415-residue polypeptide: L-cysteine:1D-myo-inositol 2-amino-2-deoxy-alpha-D-glucopyranoside ligase (415 aa).

Cysteine 47 serves as a coordination point for Zn(2+). L-cysteinyl-5'-AMP contacts are provided by residues 47 to 50 (CGIT), threonine 62, and 85 to 87 (NVT). The 'HIGH' region signature appears at 49–59 (ITPYDATHLGH). Residues 190-195 (ERGGDP) carry the 'ERGGDP' region motif. Residue tryptophan 230 participates in L-cysteinyl-5'-AMP binding. Cysteine 234 serves as a coordination point for Zn(2+). 252 to 254 (GSD) contributes to the L-cysteinyl-5'-AMP binding site. Residue histidine 259 participates in Zn(2+) binding. An L-cysteinyl-5'-AMP-binding site is contributed by isoleucine 286. The short motif at 292–296 (KMSKS) is the 'KMSKS' region element.

This sequence belongs to the class-I aminoacyl-tRNA synthetase family. MshC subfamily. Monomer. Zn(2+) serves as cofactor.

It catalyses the reaction 1D-myo-inositol 2-amino-2-deoxy-alpha-D-glucopyranoside + L-cysteine + ATP = 1D-myo-inositol 2-(L-cysteinylamino)-2-deoxy-alpha-D-glucopyranoside + AMP + diphosphate + H(+). Functionally, catalyzes the ATP-dependent condensation of GlcN-Ins and L-cysteine to form L-Cys-GlcN-Ins. The polypeptide is L-cysteine:1D-myo-inositol 2-amino-2-deoxy-alpha-D-glucopyranoside ligase (mshC) (Mycolicibacterium paratuberculosis (strain ATCC BAA-968 / K-10) (Mycobacterium paratuberculosis)).